We begin with the raw amino-acid sequence, 473 residues long: Glucose facilitated diffusion protein (473 aa).

Over 1–13 (MSSESSQGLVTRL) the chain is Cytoplasmic. A helical transmembrane segment spans residues 14-34 (ALIAAIGGLLFGYDSAVIAAI). Residues 35-59 (GTPVDIHFIAPRHLSATAAASLSGM) are Periplasmic-facing. Residues 60–80 (VVVAVLVGCVTGSLLSGWIGI) traverse the membrane as a helical segment. Residues 81–85 (RFGRR) lie on the Cytoplasmic side of the membrane. A helical transmembrane segment spans residues 86–106 (GGLLMSSICFVAAGFGAALTE). At 107–112 (KLFGTG) the chain is on the periplasmic side. Residues 113 to 133 (GSALQIFCFFRFLAGLGIGVV) traverse the membrane as a helical segment. The Cytoplasmic portion of the chain corresponds to 134–158 (STLTPTYIAEIAPPDKRGQMVSGQQ). The chain crosses the membrane as a helical span at residues 159-179 (MAIVTGALTGYIFTWLLAHFG). The Periplasmic segment spans residues 180 to 187 (SIDWVNAS). Residues 188–208 (GWCWSPASEGLIGIAFLLLLL) form a helical membrane-spanning segment. Over 209–257 (TAPDTPHWLVMKGRHSEASKILARLEPQADPNLTIQKIKAGFDKAMDKS) the chain is Cytoplasmic. A helical membrane pass occupies residues 258 to 278 (SAGLFAFGITVVFAGVSVAAF). At 279–303 (QQLVGINAVLYYAPQMFQNLGFGAD) the chain is on the periplasmic side. Residues 304-324 (TALLQTISIGVVNFIFTMIAS) form a helical membrane-spanning segment. The Cytoplasmic portion of the chain corresponds to 325–335 (RVVDRFGRKPL). A helical transmembrane segment spans residues 336–356 (LIWGALGMAAMMAVLGCCFWF). The Periplasmic portion of the chain corresponds to 357–366 (KVGGVLPLAS). Residues 367-387 (VLLYIAVFGMSWGPVCWVVLS) traverse the membrane as a helical segment. The Cytoplasmic portion of the chain corresponds to 388–396 (EMFPSSIKG). Residues 397-417 (AAMPIAVTGQWLANILVNFLF) form a helical membrane-spanning segment. At 418–429 (KVADGSPALNQT) the chain is on the periplasmic side. Residues 430 to 450 (FNHGFSYLVFAALSILGGLIV) traverse the membrane as a helical segment. Residues 451 to 473 (ARFVPETKGRSLDEIEEMWRSQK) are Cytoplasmic-facing.

It belongs to the major facilitator superfamily. Sugar transporter (TC 2.A.1.1) family.

It localises to the cell inner membrane. Functionally, allows uptake of glucose by the cell; allows growth on glucose minimal medium by E.coli cells impaired in glucose transport. Also transports fructose, but has a strong preference for glucose. This Zymomonas mobilis subsp. mobilis (strain ATCC 31821 / ZM4 / CP4) protein is Glucose facilitated diffusion protein.